The sequence spans 166 residues: Small ribosomal subunit protein uS5 (166 aa).

One can recognise an S5 DRBM domain in the interval 12 to 75 (YIEKLVQVNR…EAARRNMIQV (64 aa)).

Belongs to the universal ribosomal protein uS5 family. Part of the 30S ribosomal subunit. Contacts proteins S4 and S8.

Functionally, with S4 and S12 plays an important role in translational accuracy. Located at the back of the 30S subunit body where it stabilizes the conformation of the head with respect to the body. This is Small ribosomal subunit protein uS5 from Pseudomonas aeruginosa (strain LESB58).